The sequence spans 723 residues: Delta-like protein 1 (723 aa).

The N-terminal stretch at Met-1–Cys-17 is a signal peptide. At Gln-18–Trp-545 the chain is on the extracellular side. One can recognise a DSL domain in the interval Phe-177 to Cys-221. Disulfide bonds link Cys-179–Cys-188, Cys-192–Cys-204, Cys-212–Cys-221, Cys-226–Cys-237, Cys-230–Cys-243, Cys-245–Cys-254, Cys-257–Cys-268, Cys-263–Cys-274, Cys-276–Cys-285, Cys-292–Cys-304, Cys-298–Cys-314, Cys-316–Cys-325, Cys-332–Cys-343, Cys-337–Cys-352, Cys-354–Cys-363, Cys-370–Cys-381, Cys-375–Cys-391, Cys-393–Cys-402, Cys-409–Cys-420, Cys-414–Cys-429, Cys-431–Cys-440, Cys-447–Cys-458, Cys-452–Cys-467, Cys-469–Cys-478, Cys-485–Cys-496, Cys-490–Cys-505, and Cys-507–Cys-516. 3 EGF-like domains span residues Cys-226–Cys-254, Cys-257–Cys-285, and Cys-292–Cys-325. In terms of domain architecture, EGF-like 4; calcium-binding spans Cys-332–Cys-363. 2 EGF-like domains span residues Cys-370–Cys-402 and Cys-409–Cys-440. One can recognise an EGF-like 7; calcium-binding domain in the interval Cys-447–Cys-478. N-linked (GlcNAc...) asparagine glycosylation occurs at Asn-477. Positions Cys-485 to Cys-516 constitute an EGF-like 8 domain. The helical transmembrane segment at Val-546–Cys-568 threads the bilayer. Over Val-569–Val-723 the chain is Cytoplasmic. Lys-613 is covalently cross-linked (Glycyl lysine isopeptide (Lys-Gly) (interchain with G-Cter in ubiquitin)). Residues Ala-653–Lys-664 show a composition bias toward basic and acidic residues. A disordered region spans residues Ala-653 to Thr-702. The residue at position 694 (Ser-694) is a Phosphoserine; by PKB. At Ser-697 the chain carries Phosphoserine. The segment at Ala-720–Val-723 is interaction with MAGI1.

Homodimer. Interacts with TJP1. Interacts with MAGI1 (via PDZ domain); forms a complex with CTNNB1 and CDH2 and promotes recruitment to the adherens junction and stabilization on the cell surface. Interacts with PSEN1; undergoes a presenilin-dependent gamma-secretase cleavage that releases a Dll1-intracellular form. Interacts with MFAP5. Interacts with MIB1. Interacts with NEURL1B; leads to ubiquitination. Interacts with NEURL1. Interacts with SYNJ2BP; enhances DLL1 protein stability, and promotes Notch signaling in endothelial cells. Interacts with MAGI1, MAGI2, MAGI3 and MPDZ. Interacts (via ubiquitin) with EPN1 (via IUM domain); binding with NOTCH1 attached to neighboring cell, promotes ligand ubiquitination and EPN1 interaction, leading to NECD transendocytosis and Notch signaling. Interacts with NOTCH1. Interacts with NOTCH2NLB; leading to promote Notch signaling pathway in a cell-autonomous manner through inhibition of cis DLL1-NOTCH2 interactions. Ubiquitinated by MIB (MIB1 or MIB2), leading to its endocytosis and subsequent degradation. Ubiquitinated; promotes recycling back to the plasma membrane and confers a strong affinity for NOTCH1. Multi-ubiquitination of Lys-613 by MIB1 promotes both cis and trans-interaction with NOTCH1, as well as activation of Notch signaling. Ubiquitinated by NEURL1B. Post-translationally, phosphorylated in a membrane association-dependent manner. Phosphorylation at Ser-697 requires the presence of Ser-694, whereas phosphorylation at Ser-694 occurs independently of the other site. Phosphorylation is required for full ligand activity in vitro and affects surface presentation, ectodomain shedding, and endocytosis. In terms of processing, O-fucosylated. Can be elongated to a disaccharide by MFNG. As to expression, expressed in heart and pancreas, with lower expression in brain and muscle and almost no expression in placenta, lung, liver and kidney.

It localises to the apical cell membrane. The protein resides in the cell junction. Its subcellular location is the adherens junction. The protein localises to the membrane raft. In terms of biological role, transmembrane ligand protein of NOTCH1, NOTCH2 and NOTCH3 receptors that binds the extracellular domain (ECD) of Notch receptor in a cis and trans fashion manner. Following transinteraction, ligand cells produce mechanical force that depends of a clathrin-mediated endocytosis, requiring ligand ubiquitination, EPN1 interaction, and actin polymerisation; these events promote Notch receptor extracellular domain (NECD) transendocytosis and triggers Notch signaling through induction of cleavage, hyperphosphorylation, and nuclear accumulation of the intracellular domain of Notch receptors (NICD). Is required for embryonic development and maintenance of adult stem cells in many different tissues and immune systeme; the DLL1-induced Notch signaling is mediated through an intercellular communication that regulates cell lineage, cell specification, cell patterning and morphogenesis through effects on differentiation and proliferation. Plays a role in brain development at different level, namely by regulating neuronal differentiation of neural precursor cells via cell-cell interaction, most likely through the lateral inhibitory system in an endogenous level dependent-manner. During neocortex development, Dll1-Notch signaling transmission is mediated by dynamic interactions between intermediate neurogenic progenitors and radial glia; the cell-cell interactions are mediated via dynamic and transient elongation processes, likely to reactivate/maintain Notch activity in neighboring progenitors, and coordinate progenitor cell division and differentiation across radial and zonal boundaries. During cerebellar development, regulates Bergmann glial monolayer formation and its morphological maturation through a Notch signaling pathway. At the retina and spinal cord level, regulates neurogenesis by preventing the premature differentiation of neural progenitors and also by maintaining progenitors in spinal cord through Notch signaling pathway. Also controls neurogenesis of the neural tube in a progenitor domain-specific fashion along the dorsoventral axis. Maintains quiescence of neural stem cells and plays a role as a fate determinant that segregates asymmetrically to one daughter cell during neural stem cells mitosis, resulting in neuronal differentiation in Dll1-inheriting cell. Plays a role in immune systeme development, namely the development of all T-cells and marginal zone (MZ) B-cells. Blocks the differentiation of progenitor cells into the B-cell lineage while promoting the emergence of a population of cells with the characteristics of a T-cell/NK-cell precursor. Also plays a role during muscle development. During early development, inhibits myoblasts differentiation from the medial dermomyotomal lip and later regulates progenitor cell differentiation. Directly modulates cell adhesion and basal lamina formation in satellite cells through Notch signaling. Maintains myogenic progenitors pool by suppressing differentiation through down-regulation of MYOD1 and is required for satellite cell homing and PAX7 expression. During craniofacial and trunk myogenesis suppresses differentiation of cranial mesoderm-derived and somite-derived muscle via MYOD1 regulation but in cranial mesoderm-derived progenitors, is neither required for satellite cell homing nor for PAX7 expression. Also plays a role during pancreatic cell development. During type B pancreatic cell development, may be involved in the initiation of proximodistal patterning in the early pancreatic epithelium. Stimulates multipotent pancreatic progenitor cells proliferation and pancreatic growth by maintaining HES1 expression and PTF1A protein levels. During fetal stages of development, is required to maintain arterial identity and the responsiveness of arterial endothelial cells for VEGFA through regulation of KDR activation and NRP1 expression. Controls sprouting angiogenesis and subsequent vertical branch formation through regulation on tip cell differentiation. Negatively regulates goblet cell differentiation in intestine and controls secretory fat commitment through lateral inhibition in small intestine. Plays a role during inner ear development; negatively regulates auditory hair cell differentiation. Plays a role during nephron development through Notch signaling pathway. Regulates growth, blood pressure and energy homeostasis. This chain is Delta-like protein 1, found in Homo sapiens (Human).